Here is a 408-residue protein sequence, read N- to C-terminus: 1-deoxy-D-xylulose 5-phosphate reductoisomerase (408 aa).

NADPH-binding residues include Thr-27, Gly-28, Ser-29, Ile-30, Ala-53, Arg-54, Asn-55, and Asn-140. Lys-141 is a binding site for 1-deoxy-D-xylulose 5-phosphate. Residue Glu-142 coordinates NADPH. Asp-166 contributes to the Mn(2+) binding site. 4 residues coordinate 1-deoxy-D-xylulose 5-phosphate: Ser-167, Glu-168, Ser-192, and His-215. Glu-168 lines the Mn(2+) pocket. Gly-221 provides a ligand contact to NADPH. 1-deoxy-D-xylulose 5-phosphate is bound by residues Ser-228, Asn-233, Lys-234, and Glu-237. A Mn(2+)-binding site is contributed by Glu-237.

This sequence belongs to the DXR family. Mg(2+) serves as cofactor. The cofactor is Mn(2+).

It carries out the reaction 2-C-methyl-D-erythritol 4-phosphate + NADP(+) = 1-deoxy-D-xylulose 5-phosphate + NADPH + H(+). Its pathway is isoprenoid biosynthesis; isopentenyl diphosphate biosynthesis via DXP pathway; isopentenyl diphosphate from 1-deoxy-D-xylulose 5-phosphate: step 1/6. Functionally, catalyzes the NADPH-dependent rearrangement and reduction of 1-deoxy-D-xylulose-5-phosphate (DXP) to 2-C-methyl-D-erythritol 4-phosphate (MEP). The chain is 1-deoxy-D-xylulose 5-phosphate reductoisomerase from Nitratidesulfovibrio vulgaris (strain DP4) (Desulfovibrio vulgaris).